We begin with the raw amino-acid sequence, 461 residues long: GTPase Der (461 aa).

EngA-type G domains are found at residues 3–167 (PQVI…GEKQ) and 190–371 (LKLA…AAWS). GTP-binding positions include 9–16 (GRPNVGKS), 56–60 (DTAGW), 119–122 (NKAE), 196–203 (GRPNAGKS), 249–253 (DTAGM), and 314–317 (NKWD). Residues 372–456 (KRVPTAALNR…PIRLTLRSPK (85 aa)) form the KH-like domain.

This sequence belongs to the TRAFAC class TrmE-Era-EngA-EngB-Septin-like GTPase superfamily. EngA (Der) GTPase family. Associates with the 50S ribosomal subunit.

Its function is as follows. GTPase that plays an essential role in the late steps of ribosome biogenesis. The polypeptide is GTPase Der (Novosphingobium aromaticivorans (strain ATCC 700278 / DSM 12444 / CCUG 56034 / CIP 105152 / NBRC 16084 / F199)).